Consider the following 91-residue polypeptide: Non-specific lipid-transfer protein 1 (91 aa).

4 disulfides stabilise this stretch: Cys-3-Cys-50, Cys-13-Cys-27, Cys-28-Cys-73, and Cys-48-Cys-87.

Belongs to the plant LTP family.

Functionally, plant non-specific lipid-transfer proteins transfer phospholipids as well as galactolipids across membranes. May play a role in wax or cutin deposition in the cell walls of expanding epidermal cells and certain secretory tissues. In Morus nigra (Black mulberry), this protein is Non-specific lipid-transfer protein 1.